A 641-amino-acid polypeptide reads, in one-letter code: FAD-binding monooxygenase ausB (641 aa).

The disordered stretch occupies residues 1-68 (MAIGPKPESI…DSTTNVPYSL (68 aa)). Positions 49–68 (WLTSTDQPQPDSTTNVPYSL) are enriched in polar residues. FAD-binding positions include 115 to 118 (TWYW), 127 to 128 (DI), and Tyr-133. Residue 125-127 (MCD) participates in NADP(+) binding. NADP(+) is bound by residues 272–278 (TGSTAVQ) and 295–296 (RT).

Belongs to the FAD-binding monooxygenase family. Requires FAD as cofactor.

The enzyme catalyses protoaustinoid A + AH2 + O2 = berkeleyone A + A + H2O. It functions in the pathway secondary metabolite biosynthesis; terpenoid biosynthesis. FAD-binding monooxygenase; part of the gene cluster A that mediates the biosynthesis of the fungal meroterpenoid acetoxydehydroaustin. The first step of the pathway is the synthesis of 3,5-dimethylorsellinic acid by the polyketide synthase ausA. 3,5-dimethylorsellinic acid is then prenylated by the polyprenyl transferase ausN. Further epoxidation by the FAD-dependent monooxygenase ausM and cyclization by the probable terpene cyclase ausL lead to the formation of protoaustinoid A. Protoaustinoid A is then oxidized to spiro-lactone preaustinoid A3 by the combined action of the FAD-binding monooxygenases ausB and ausC, and the dioxygenase ausE. Acid-catalyzed keto-rearrangement and ring contraction of the tetraketide portion of preaustinoid A3 by ausJ lead to the formation of preaustinoid A4. The aldo-keto reductase ausK, with the help of ausH, is involved in the next step by transforming preaustinoid A4 into isoaustinone which is in turn hydroxylated by the P450 monooxygenase ausI to form austinolide. The cytochrome P450 monooxygenase ausG then modifies austinolide to austinol. Austinol is further acetylated to austin by the O-acetyltransferase ausP, which spontaneously changes to dehydroaustin. The cytochrome P450 monooxygenase then converts dehydroaustin is into 7-dehydrodehydroaustin. The hydroxylation catalyzed by ausR permits the second O-acetyltransferase ausQ to add an additional acetyl group to the molecule, leading to the formation of acetoxydehydroaustin. Due to genetic rearrangements of the clusters and the subsequent loss of some enzymes, the end product of the Penicillium brasilianum austinoid biosynthesis clusters is acetoxydehydroaustin. The sequence is that of FAD-binding monooxygenase ausB from Penicillium brasilianum.